Consider the following 375-residue polypeptide: Glucokinase 1 (375 aa).

25-30 (CDVGGS) is an ATP binding site.

The protein belongs to the bacterial glucokinase family. As to quaternary structure, monomer. Post-translationally, the N-terminus is blocked.

The catalysed reaction is D-glucose + ATP = D-glucose 6-phosphate + ADP + H(+). This is Glucokinase 1 (GK1) from Trichomonas vaginalis.